Reading from the N-terminus, the 376-residue chain is Queuine tRNA-ribosyltransferase (376 aa).

Aspartate 93 acts as the Proton acceptor in catalysis. Substrate-binding positions include 93–97, aspartate 147, glutamine 190, and glycine 217; that span reads DSGGF. The RNA binding stretch occupies residues 248-254; the sequence is GVGKPGD. The active-site Nucleophile is the aspartate 267. The Zn(2+) site is built by cysteine 305, cysteine 307, cysteine 310, and histidine 336.

This sequence belongs to the queuine tRNA-ribosyltransferase family. Homodimer. Within each dimer, one monomer is responsible for RNA recognition and catalysis, while the other monomer binds to the replacement base PreQ1. Zn(2+) is required as a cofactor.

The enzyme catalyses 7-aminomethyl-7-carbaguanine + guanosine(34) in tRNA = 7-aminomethyl-7-carbaguanosine(34) in tRNA + guanine. It functions in the pathway tRNA modification; tRNA-queuosine biosynthesis. Its function is as follows. Catalyzes the base-exchange of a guanine (G) residue with the queuine precursor 7-aminomethyl-7-deazaguanine (PreQ1) at position 34 (anticodon wobble position) in tRNAs with GU(N) anticodons (tRNA-Asp, -Asn, -His and -Tyr). Catalysis occurs through a double-displacement mechanism. The nucleophile active site attacks the C1' of nucleotide 34 to detach the guanine base from the RNA, forming a covalent enzyme-RNA intermediate. The proton acceptor active site deprotonates the incoming PreQ1, allowing a nucleophilic attack on the C1' of the ribose to form the product. After dissociation, two additional enzymatic reactions on the tRNA convert PreQ1 to queuine (Q), resulting in the hypermodified nucleoside queuosine (7-(((4,5-cis-dihydroxy-2-cyclopenten-1-yl)amino)methyl)-7-deazaguanosine). This Dinoroseobacter shibae (strain DSM 16493 / NCIMB 14021 / DFL 12) protein is Queuine tRNA-ribosyltransferase.